The following is a 298-amino-acid chain: Cyanophycinase (298 aa).

Residues serine 155, glutamate 173, and histidine 197 each act as charge relay system in the active site.

The protein belongs to the peptidase S51 family.

It carries out the reaction [L-4-(L-arginin-2-N-yl)aspartate](n) + H2O = [L-4-(L-arginin-2-N-yl)aspartate](n-1) + L-4-(L-arginin-2-N-yl)aspartate. In terms of biological role, exopeptidase that catalyzes the hydrolytic cleavage of multi-L-arginyl-poly-L-aspartic acid (cyanophycin; a water-insoluble reserve polymer) into aspartate-arginine dipeptides. The protein is Cyanophycinase (cphB) of Nostoc sp. (strain PCC 7120 / SAG 25.82 / UTEX 2576).